The primary structure comprises 339 residues: Glycerol-3-phosphate dehydrogenase [NAD(P)+] (339 aa).

NADPH contacts are provided by serine 14, tyrosine 15, histidine 35, and lysine 109. Residues lysine 109, glycine 138, and threonine 140 each coordinate sn-glycerol 3-phosphate. An NADPH-binding site is contributed by alanine 142. Residues lysine 194, aspartate 247, serine 257, arginine 258, and asparagine 259 each coordinate sn-glycerol 3-phosphate. The active-site Proton acceptor is lysine 194. Position 258 (arginine 258) interacts with NADPH. Positions 282 and 284 each coordinate NADPH.

This sequence belongs to the NAD-dependent glycerol-3-phosphate dehydrogenase family.

It is found in the cytoplasm. It catalyses the reaction sn-glycerol 3-phosphate + NAD(+) = dihydroxyacetone phosphate + NADH + H(+). The catalysed reaction is sn-glycerol 3-phosphate + NADP(+) = dihydroxyacetone phosphate + NADPH + H(+). The protein operates within membrane lipid metabolism; glycerophospholipid metabolism. Catalyzes the reduction of the glycolytic intermediate dihydroxyacetone phosphate (DHAP) to sn-glycerol 3-phosphate (G3P), the key precursor for phospholipid synthesis. The protein is Glycerol-3-phosphate dehydrogenase [NAD(P)+] of Shewanella halifaxensis (strain HAW-EB4).